The sequence spans 465 residues: UDP-N-acetylmuramoylalanine--D-glutamate ligase (465 aa).

Glycine 124–threonine 130 provides a ligand contact to ATP.

Belongs to the MurCDEF family.

The protein resides in the cytoplasm. It catalyses the reaction UDP-N-acetyl-alpha-D-muramoyl-L-alanine + D-glutamate + ATP = UDP-N-acetyl-alpha-D-muramoyl-L-alanyl-D-glutamate + ADP + phosphate + H(+). The protein operates within cell wall biogenesis; peptidoglycan biosynthesis. In terms of biological role, cell wall formation. Catalyzes the addition of glutamate to the nucleotide precursor UDP-N-acetylmuramoyl-L-alanine (UMA). This chain is UDP-N-acetylmuramoylalanine--D-glutamate ligase, found in Ruminiclostridium cellulolyticum (strain ATCC 35319 / DSM 5812 / JCM 6584 / H10) (Clostridium cellulolyticum).